Here is a 231-residue protein sequence, read N- to C-terminus: Extracellular deoxyribonuclease (231 aa).

The N-terminal stretch at 1–20 is a signal peptide; sequence MMIFRFVTTLAASLPLLTFA.

The protein belongs to the EndA/NucM nuclease family.

The protein resides in the secreted. This Vibrio cholerae serotype O1 (strain ATCC 39315 / El Tor Inaba N16961) protein is Extracellular deoxyribonuclease (dns).